The following is a 472-amino-acid chain: FAD-dependent monooxygenase ltmM (472 aa).

A helical transmembrane segment spans residues 7-27; it reads VIIVGGSVAGLSLAHCLEKIG. FAD contacts are provided by Glu-34, Gly-48, and Arg-107. Asn-186 carries an N-linked (GlcNAc...) asparagine glycan. Residues Asp-306 and Ala-319 each contribute to the FAD site. The chain crosses the membrane as a helical span at residues 450–470; it reads IVYALYLVAAAAFILYCLSSL.

The protein belongs to the paxM FAD-dependent monooxygenase family. It depends on FAD as a cofactor.

It is found in the membrane. It functions in the pathway secondary metabolite biosynthesis. In terms of biological role, FAD-dependent monooxygenase; part of the gene cluster that mediates the biosynthesis of lolitrems, indole-diterpene mycotoxins that are potent tremorgens in mammals, and are synthesized by clavicipitaceous fungal endophytes in association with their grass hosts. The geranylgeranyl diphosphate (GGPP) synthase ltmG is proposed to catalyze the first step in lolitrem biosynthesis. LtmG catalyzes a series of iterative condensations of isopentenyl diphosphate (IPP) with dimethylallyl diphosphate (DMAPP), geranyl diphosphate (GPP), and farnesyl diphosphate (FPP), to form GGPP. GGPP then condenses with indole-3-glycerol phosphate to form 3-geranylgeranylindole, an acyclic intermediate, to be incorporated into paxilline. Either ltmG or ltmC could be responsible for this step, as both are putative prenyl transferases. The FAD-dependent monooxygenase ltmM then catalyzes the epoxidation of the two terminal alkenes of the geranylgeranyl moiety, which is subsequently cyclized by ltmC, to paspaline. The cytochrome P450 monooxygenases ltmQ and ltmP can sequentially oxidize paspaline to terpendole E and terpendole F. Alternatively, ltmP converts paspaline to an intermediate which is oxidized by ltmQ to terpendole F. LtmF, ltmK, ltmE and ltmJ appear to be unique to the epichloe endophytes. The prenyltransferase ltmF is involved in the 27-hydroxyl-O-prenylation. The cytochrome P450 monooxygenase ltmK is required for the oxidative acetal ring formation. The multi-functional prenyltransferase ltmE is required for C20- and C21-prenylations of the indole ring of paspalanes and acts together with the cytochrome P450 monooxygenase ltmJ to yield lolitremanes by multiple oxidations and ring closures. The stereoisomer pairs of lolitriol and lolitrem N or lolitrem B and lolitrem F may be attributed to variations in the way in which ring closure can occur under the action of ltmJ. While the major product of this pathway is lolitrem B, the prenyl transferases and cytochrome P450 monooxygenases identified in this pathway have a remarkable versatility in their regio- and stereo-specificities to generate a diverse range of metabolites that are products of a metabolic grid rather than a linear pathway. This Epichloe festucae (strain Fl1) protein is FAD-dependent monooxygenase ltmM (ltmM).